Reading from the N-terminus, the 614-residue chain is Major facilitator superfamily domain-containing protein 6-like protein B (614 aa).

Transmembrane regions (helical) follow at residues 41–61 and 78–98; these read LGLG…VHLL and FFIM…AFYP. The span at 177 to 191 shows a compositional bias: polar residues; that stretch reads HQRFTDQFPSSSPLT. Residues 177–243 are disordered; sequence HQRFTDQFPS…PFATHPNVSH (67 aa). Residues 205 to 227 show a composition bias toward low complexity; that stretch reads GSGKAQKANSSKSSASNSKQRSS. Helical transmembrane passes span 270–290, 312–332, 345–365, 393–413, 425–445, 457–477, 480–500, 520–540, and 546–566; these read IFLI…PLEW, LWIW…FLID, VSFH…LSTL, IVLT…IQNF, ELYM…LYFF, WMVV…SFLW, WSVV…WWAI, LRWL…GFII, and AVLY…FLLV.

This sequence belongs to the major facilitator superfamily. MFSD6 family.

It is found in the membrane. This chain is Major facilitator superfamily domain-containing protein 6-like protein B (mfsd6l-b), found in Xenopus laevis (African clawed frog).